Reading from the N-terminus, the 831-residue chain is Leucine--tRNA ligase (831 aa).

The 'HIGH' region signature appears at 36–46 (PYPSGKLHIGH). Residues 607-611 (KMSKS) carry the 'KMSKS' region motif. Lys-610 is a binding site for ATP.

The protein belongs to the class-I aminoacyl-tRNA synthetase family.

Its subcellular location is the cytoplasm. The catalysed reaction is tRNA(Leu) + L-leucine + ATP = L-leucyl-tRNA(Leu) + AMP + diphosphate. The sequence is that of Leucine--tRNA ligase from Neorickettsia sennetsu (strain ATCC VR-367 / Miyayama) (Ehrlichia sennetsu).